The primary structure comprises 1168 residues: Homeodomain-interacting protein kinase 2 (1168 aa).

Position 16 is a phosphoserine (S16). Residue K32 forms a Glycyl lysine isopeptide (Lys-Gly) (interchain with G-Cter in SUMO); alternate linkage. K32 participates in a covalent cross-link: Glycyl lysine isopeptide (Lys-Gly) (interchain with G-Cter in SUMO2); alternate. Residues 97-230 (SASSTSVTGQ…TNEIVAIKIL (134 aa)) are transcriptional corepression. 2 positions are modified to phosphoserine: S118 and S135. A Phosphothreonine modification is found at T141. The tract at residues 189 to 520 (HEVLCSMTNT…DADKRITPIE (332 aa)) is interaction with DAXX. Residues 199–527 (YEVLEFLGRG…PIETLNHPFV (329 aa)) form the Protein kinase domain. ATP contacts are provided by residues 205-213 (LGRGTFGQV) and K228. Phosphothreonine occurs at positions 252 and 273. The active-site Proton acceptor is D324. Phosphotyrosine is present on Y361. The residue at position 441 (S441) is a Phosphoserine. Phosphothreonine is present on residues T482, T517, and T566. The interval 539 to 816 (THVKSCFQNM…KENTPPRCAM (278 aa)) is interaction with SKI and SMAD1. An interaction with DAZAP2 region spans residues 595–772 (PSAASMAAVA…MRQQPTSTTS (178 aa)). Phosphoserine is present on residues S607 and S641. Phosphothreonine is present on T660. The tract at residues 724 to 869 (RNTHAHGSHY…ITISSDTDEE (146 aa)) is interaction with POU4F1. The interval 746–848 (HVTLPAAQPL…TRERQRQTIV (103 aa)) is interaction with CTBP1. Residues 759-869 (VAHVMRQQPT…ITISSDTDEE (111 aa)) form an interaction with HMGA1 region. The interval 764-820 (RQQPTSTTSSRKSKQHQPSMRNVSTCEVTSSQSTSSPQRSKRVKENTPPRCAMVHSS) is disordered. The segment covering 765–791 (QQPTSTTSSRKSKQHQPSMRNVSTCEV) has biased composition (polar residues). The short motif at 774-777 (RKSK) is the Nuclear localization signal 1 (NLS1) element. Phosphoserine is present on residues S787 and S799. Over residues 792–801 (TSSQSTSSPQ) the composition is skewed to low complexity. A Nuclear localization signal 2 (NLS2) motif is present at residues 804–807 (KRVK). The interval 812–907 (PRCAMVHSSP…YSDSSSNTSP (96 aa)) is interaction with TP53 and TP73. Positions 845 to 879 (QTIVIPDTPSPTVSVITISSDTDEEEEQKHAPTST) are interaction with UBE2I. The localization to nuclear speckles stretch occupies residues 845-952 (QTIVIPDTPS…PLKTQASEVL (108 aa)). The interval 845–952 (QTIVIPDTPS…PLKTQASEVL (108 aa)) is required for localization to nuclear speckles. The segment at 854–876 (SPTVSVITISSDTDEEEEQKHAP) is interaction with UBL1. The interval 856 to 880 (TVSVITISSDTDEEEEQKHAPTSTV) is SUMO interaction motifs (SIM); required for nuclear localization and kinase activity. The disordered stretch occupies residues 894–936 (HDSPYSDSSSNTSPYSVQQRTGHNGTNTLDTKGALENHCTGNP). Residues 895–909 (DSPYSDSSSNTSPYS) are compositionally biased toward low complexity. S906 carries the phosphoserine modification. The segment at 907–1022 (PYSVQQRTGH…LSQAQPHMAT (116 aa)) is interaction with AXIN1. Residues 910-923 (VQQRTGHNGTNTLD) are compositionally biased toward polar residues. Glycyl lysine isopeptide (Lys-Gly) (interchain with G-Cter in SUMO2) cross-links involve residues K925 and K945. The autoinhibitory domain (AID) stretch occupies residues 956–1168 (DSLGPAVSTG…PAKVNQYPYI (213 aa)). Residues 960–1030 (PAVSTGHHSS…ATDRTGSHRR (71 aa)) are disordered. S963 carries the phosphoserine modification. Composition is skewed to low complexity over residues 965 to 991 (GHHS…GSSS) and 998 to 1018 (QQRP…QAQP). Phosphoserine is present on residues S1014, S1125, and S1158. Residue K1161 forms a Glycyl lysine isopeptide (Lys-Gly) (interchain with G-Cter in SUMO) linkage.

The protein belongs to the protein kinase superfamily. CMGC Ser/Thr protein kinase family. HIPK subfamily. Interacts with CREB1, SIAH1, WSB1, CBX4, TRADD, p53/TP53, TP73, TP63, CREBBP, DAXX, P53DINP1, SKI, SMAD1, SMAD2 and SMAD3, but not SMAD4. Interacts with ATF1, PML, RUNX1, EP300, NKX1-2, NKX2-5, UBE2I, HMGA1, CTBP1, AXIN1, NLK, MYB, POU4F1, POU4F2, POU4F3, UBE2I, UBL1 and ZBTB4. Probably part of a complex consisting of p53/TP53, HIPK2 and AXIN1. Interacts with SP100; positively regulates TP53-dependent transcription. Interacts with DAZAP2; the interaction results in phosphorylation of DAZAP2 which causes localization of DAZAP2 to the nucleus, reduces interaction of DAZAP2 with HIPK2 and prevents DAZAP2-dependent degradation of HIPK2. Interacts with SIAH1; the interaction is promoted by DAZAP2 and results in SIAH1-mediated ubiquitination and subsequent proteasomal degradation of HIPK2. Autophosphorylation at Tyr-361 in the activation loop activates the kinase and promotes nuclear localization. Post-translationally, sumoylated. When conjugated it is directed to nuclear speckles. Desumoylated by SENP1. Sumoylation on Lys-32 is promoted by the E3 SUMO-protein ligase CBX4. In terms of processing, ubiquitinated by FBXO3, WSB1 and SIAH1, leading to rapid proteasome-dependent degradation. The degradation mediated by FBXO3, but not ubiquitination, is prevented in the presence of PML. The degradation mediated by WSB1 and SIAH1 is reversibly reduced upon DNA damage. Cleaved at Asp-895 and Asp-956 by CASP6 in a p53/TP53-dependent manner. The cleaved form lacks the autoinhibitory C-terminal domain (AID), resulting in a hyperactive kinase, which potentiates p53/TP53 Ser-46 phosphorylation and subsequent activation of the cell death machinery.

Its subcellular location is the nucleus. The protein resides in the PML body. It is found in the cytoplasm. The catalysed reaction is L-seryl-[protein] + ATP = O-phospho-L-seryl-[protein] + ADP + H(+). The enzyme catalyses L-threonyl-[protein] + ATP = O-phospho-L-threonyl-[protein] + ADP + H(+). Functionally, serine/threonine-protein kinase involved in transcription regulation, p53/TP53-mediated cellular apoptosis and regulation of the cell cycle. Acts as a corepressor of several transcription factors, including SMAD1 and POU4F1/Brn3a and probably NK homeodomain transcription factors. Phosphorylates PDX1, ATF1, PML, p53/TP53, CREB1, CTBP1, CBX4, RUNX1, EP300, CTNNB1, HMGA1, ZBTB4 and DAZAP2. Inhibits cell growth and promotes apoptosis through the activation of p53/TP53 both at the transcription level and at the protein level (by phosphorylation and indirect acetylation). The phosphorylation of p53/TP53 may be mediated by a p53/TP53-HIPK2-AXIN1 complex. Involved in the response to hypoxia by acting as a transcriptional co-suppressor of HIF1A. Mediates transcriptional activation of TP73. In response to TGFB, cooperates with DAXX to activate JNK. Negative regulator through phosphorylation and subsequent proteasomal degradation of CTNNB1 and the antiapoptotic factor CTBP1. In the Wnt/beta-catenin signaling pathway acts as an intermediate kinase between MAP3K7/TAK1 and NLK to promote the proteasomal degradation of MYB. Phosphorylates CBX4 upon DNA damage and promotes its E3 SUMO-protein ligase activity. Activates CREB1 and ATF1 transcription factors by phosphorylation in response to genotoxic stress. In response to DNA damage, stabilizes PML by phosphorylation. PML, HIPK2 and FBXO3 may act synergically to activate p53/TP53-dependent transactivation. Promotes angiogenesis, and is involved in erythroid differentiation, especially during fetal liver erythropoiesis. Phosphorylation of RUNX1 and EP300 stimulates EP300 transcription regulation activity. Triggers ZBTB4 protein degradation in response to DNA damage. In response to DNA damage, phosphorylates DAZAP2 which localizes DAZAP2 to the nucleus, reduces interaction of DAZAP2 with HIPK2 and prevents DAZAP2-dependent ubiquitination of HIPK2 by E3 ubiquitin-protein ligase SIAH1 and subsequent proteasomal degradation. Modulates HMGA1 DNA-binding affinity. In response to high glucose, triggers phosphorylation-mediated subnuclear localization shifting of PDX1. Involved in the regulation of eye size, lens formation and retinal lamination during late embryogenesis. This is Homeodomain-interacting protein kinase 2 (Hipk2) from Mesocricetus auratus (Golden hamster).